Here is a 185-residue protein sequence, read N- to C-terminus: Ribosome-recycling factor (185 aa).

Belongs to the RRF family.

The protein localises to the cytoplasm. In terms of biological role, responsible for the release of ribosomes from messenger RNA at the termination of protein biosynthesis. May increase the efficiency of translation by recycling ribosomes from one round of translation to another. The polypeptide is Ribosome-recycling factor (Streptococcus mutans serotype c (strain ATCC 700610 / UA159)).